The sequence spans 419 residues: Tyrosine--tRNA ligase (419 aa).

An L-tyrosine-binding site is contributed by tyrosine 36. A 'HIGH' region motif is present at residues 41 to 50 (PTGDSMHIGH). Residues tyrosine 168 and glutamine 172 each coordinate L-tyrosine. The short motif at 230–234 (KFGKT) is the 'KMSKS' region element. Lysine 233 is an ATP binding site. Residues 352–419 (KNIVDFLVDA…KKKYFLARVK (68 aa)) form the S4 RNA-binding domain.

Belongs to the class-I aminoacyl-tRNA synthetase family. TyrS type 1 subfamily. Homodimer.

Its subcellular location is the cytoplasm. It carries out the reaction tRNA(Tyr) + L-tyrosine + ATP = L-tyrosyl-tRNA(Tyr) + AMP + diphosphate + H(+). Functionally, catalyzes the attachment of tyrosine to tRNA(Tyr) in a two-step reaction: tyrosine is first activated by ATP to form Tyr-AMP and then transferred to the acceptor end of tRNA(Tyr). This Latilactobacillus sakei subsp. sakei (strain 23K) (Lactobacillus sakei subsp. sakei) protein is Tyrosine--tRNA ligase.